We begin with the raw amino-acid sequence, 1167 residues long: Carbamoyl phosphate synthase large chain (1167 aa).

Positions 1-455 are carboxyphosphate synthetic domain; sequence MPRRTDIKSI…SLQKALRGLE (455 aa). Residues R129, R221, G227, G228, E260, V262, E267, G293, V294, H295, Q337, and E351 each coordinate ATP. In terms of domain architecture, ATP-grasp 1 spans 184 to 380; the sequence is LETRWNLGEG…IAKIAAKLAV (197 aa). Residues Q337, E351, and N353 each coordinate Mg(2+). Q337, E351, and N353 together coordinate Mn(2+). The tract at residues 456–619 is oligomerization domain; it reads TGLTGLDEIE…PFAGALANEA (164 aa). The tract at residues 620–1031 is carbamoyl phosphate synthetic domain; that stretch reads QVSSRKKVVI…AFAKSQLGAG (412 aa). Positions 748 to 960 constitute an ATP-grasp 2 domain; sequence QKLLHKLGLS…IAKIAARIMA (213 aa). The ATP site is built by R784, T844, L846, E851, G876, I877, H878, S879, Q919, and E931. Mg(2+) contacts are provided by Q919, E931, and N933. Mn(2+) is bound by residues Q919, E931, and N933. In terms of domain architecture, MGS-like spans 1032–1167; that stretch reads VDLPRSGTLF…EVRPLQEYFA (136 aa). The allosteric domain stretch occupies residues 1032-1167; sequence VDLPRSGTLF…EVRPLQEYFA (136 aa).

The protein belongs to the CarB family. Composed of two chains; the small (or glutamine) chain promotes the hydrolysis of glutamine to ammonia, which is used by the large (or ammonia) chain to synthesize carbamoyl phosphate. Tetramer of heterodimers (alpha,beta)4. Requires Mg(2+) as cofactor. Mn(2+) serves as cofactor.

It catalyses the reaction hydrogencarbonate + L-glutamine + 2 ATP + H2O = carbamoyl phosphate + L-glutamate + 2 ADP + phosphate + 2 H(+). The catalysed reaction is hydrogencarbonate + NH4(+) + 2 ATP = carbamoyl phosphate + 2 ADP + phosphate + 2 H(+). It participates in amino-acid biosynthesis; L-arginine biosynthesis; carbamoyl phosphate from bicarbonate: step 1/1. The protein operates within pyrimidine metabolism; UMP biosynthesis via de novo pathway; (S)-dihydroorotate from bicarbonate: step 1/3. In terms of biological role, large subunit of the glutamine-dependent carbamoyl phosphate synthetase (CPSase). CPSase catalyzes the formation of carbamoyl phosphate from the ammonia moiety of glutamine, carbonate, and phosphate donated by ATP, constituting the first step of 2 biosynthetic pathways, one leading to arginine and/or urea and the other to pyrimidine nucleotides. The large subunit (synthetase) binds the substrates ammonia (free or transferred from glutamine from the small subunit), hydrogencarbonate and ATP and carries out an ATP-coupled ligase reaction, activating hydrogencarbonate by forming carboxy phosphate which reacts with ammonia to form carbamoyl phosphate. This Mesorhizobium japonicum (strain LMG 29417 / CECT 9101 / MAFF 303099) (Mesorhizobium loti (strain MAFF 303099)) protein is Carbamoyl phosphate synthase large chain.